The following is a 454-amino-acid chain: Asparagine--tRNA ligase (454 aa).

This sequence belongs to the class-II aminoacyl-tRNA synthetase family. As to quaternary structure, homodimer.

Its subcellular location is the cytoplasm. It catalyses the reaction tRNA(Asn) + L-asparagine + ATP = L-asparaginyl-tRNA(Asn) + AMP + diphosphate + H(+). The protein is Asparagine--tRNA ligase of Mesoplasma florum (strain ATCC 33453 / NBRC 100688 / NCTC 11704 / L1) (Acholeplasma florum).